A 571-amino-acid chain; its full sequence is MSFEMSREQYASLYGPTTGDAIRLADTELFARIEKDLTAPGEEAVFGGGKVVRDGMGQNGRLGRDEDVPDLVITNVVVIDWTGICKADVAVRDGHIMRIGKAGNPHVMDGVDIVIGVATDVIAGEGKILTAGGIDSHIHFISPDQIETALVSGITTMIGGGTGPSESTKATTITPGAWNIHNMLRSFEQFPMNFGLLGKGHGSSVPAMAEQITAGAIGLKIHEDWGATPSSINTSLQVADEYDVQVAIHTDTLNEAGFVEDTRAAIAGRVIHTFHTEGAGGGHAPDIIELAQDPNILPASTNPTLPYTRNTLEEHLDMLMVCHHLNPGIPEDVAFADSRIRKETIAAEDVLQDMGIFSMTSSDSQAMGRVGEVVLRTWQVADSMKRQRGPLPEDEGTGGDNHRIRRYIAKYTINPATAHGISHAVGSVEEGKFADLVLWEPRFFGVKPDLILKGGQMVHGVMGDPNASIPTPQPRWYRRAFGAYGTAVAASSITFLSRAAIRAGVPETLGLRKVVRECRDIRTLTKADMKLNGETPPLRVDPQTYEVRVDGTPVTCEPQHVLPMAQRYFLF.

In terms of domain architecture, Urease spans Gly132–Phe571. Positions 137, 139, and 220 each coordinate Ni(2+). The residue at position 220 (Lys220) is an N6-carboxylysine. His222 contacts substrate. The Ni(2+) site is built by His249 and His275. The Proton donor role is filled by His323. Asp363 is a binding site for Ni(2+).

Belongs to the metallo-dependent hydrolases superfamily. Urease alpha subunit family. Heterotrimer of UreA (gamma), UreB (beta) and UreC (alpha) subunits. Three heterotrimers associate to form the active enzyme. It depends on Ni cation as a cofactor. Carboxylation allows a single lysine to coordinate two nickel ions.

It is found in the cytoplasm. The catalysed reaction is urea + 2 H2O + H(+) = hydrogencarbonate + 2 NH4(+). It participates in nitrogen metabolism; urea degradation; CO(2) and NH(3) from urea (urease route): step 1/1. The sequence is that of Urease subunit alpha from Kocuria rhizophila (strain ATCC 9341 / DSM 348 / NBRC 103217 / DC2201).